The primary structure comprises 147 residues: Small ribosomal subunit protein bS6 (147 aa).

Positions 103–147 (AARMAANLPSFPEDEDTEEKGSAPLAREEEGIGEEAQTDEAEDKE) are disordered. Acidic residues predominate over residues 133–147 (GIGEEAQTDEAEDKE).

The protein belongs to the bacterial ribosomal protein bS6 family.

Binds together with bS18 to 16S ribosomal RNA. The protein is Small ribosomal subunit protein bS6 of Syntrophobacter fumaroxidans (strain DSM 10017 / MPOB).